A 761-amino-acid polypeptide reads, in one-letter code: Complement factor B (761 aa).

The first 25 residues, 1-25, serve as a signal peptide directing secretion; the sequence is MGIGHNPRLCLVPLILGLLCGGVGM. Sushi domains lie at 35–100, 101–160, and 163–220; these read SPCS…ECKA, IRCP…ICDD, and TYCP…SCQD. Disulfide bonds link Cys37–Cys76, Cys62–Cys98, Cys103–Cys145, Cys131–Cys158, Cys165–Cys205, and Cys191–Cys218. Asn122 and Asn142 each carry an N-linked (GlcNAc...) asparagine glycan. One can recognise a VWFA domain in the interval 270 to 469; that stretch reads NIYLVLDGSD…NLEDVFVQML (200 aa). Ser278 and Ser280 together coordinate Mg(2+). N-linked (GlcNAc...) asparagine glycosylation is present at Asn285. Thr353 serves as a coordination point for Mg(2+). Residue Asn378 is glycosylated (N-linked (GlcNAc...) asparagine). The Peptidase S1 domain occupies 477 to 754; the sequence is LCGMVWEHKD…VLPWLKEKLQ (278 aa). 5 cysteine pairs are disulfide-bonded: Cys478–Cys596, Cys511–Cys527, Cys599–Cys615, Cys656–Cys682, and Cys695–Cys725. Active-site charge relay system residues include His526 and Asp576. Ser699 (charge relay system) is an active-site residue.

This sequence belongs to the peptidase S1 family. Monomer. Interacts with complement C3b; this interaction is dependent on the presence of Mg(2+). In terms of assembly, catalytic component of the C3 convertase of the alternative complement pathway, also named C3bBb, composed of complement factor B Bb and complement C3b. Catalytic component of the C5 convertase of the alternative complement pathway, also named C3bBb3b, composed of complement factor B Bb and additional molecules of complement C3b. Interacts to CFP; this interaction contributes to the stabilization of the active C3-convertase enzyme complex. Requires Mg(2+) as cofactor. Mn(2+) serves as cofactor. In terms of processing, cleaved by CFD following activation of the alternative complement system, generating Ba and Bb chains. Cleavage and activation takes place when CFB is already associated with complement C3b.

It localises to the secreted. It is found in the cell surface. The catalysed reaction is Cleavage of Arg-|-Ser bond in complement component C3 alpha-chain to yield C3a and C3b, and Arg-|-Xaa bond in complement component C5 alpha-chain to yield C5a and C5b.. Its function is as follows. Precursor of the catalytic component of the C3 and C5 convertase complexes of the alternative pathway of the complement system, a cascade of proteins that leads to phagocytosis and breakdown of pathogens and signaling that strengthens the adaptive immune system. The alternative complement pathway acts as an amplification loop that enhances other complement pathways (classical, lectin and GZMK) by promoting formation of additional C3 and C5 convertases. CFB is cleaved and activated by CFD to generate Ba and Bb chains; Bb chain constituting the catalytic component of the C3 and C5 convertases. Functionally, serine protease component of the complement C3 and C5 convertase complexes of the alternative complement pathway. Following cleavage and activation by factor D (CFD), forms the C3 convertase together with complement C3b. As part of the C3 convertase, cleaves and activates C3 into C3a anaphylatoxin and C3b opsonin, the next components of the complement pathways. When an additional complement C3b molecule binds to the C3 convertase, forms the C5 convertase, which cleaves and activates C5 into C5a anaphylatoxin and C5b component of the membrane attack complex. Involved in proliferation and differentiation of preactivated B-lymphocytes, rapid spreading of peripheral blood monocytes, stimulation of lymphocyte blastogenesis and lysis of erythrocytes. The sequence is that of Complement factor B (CFB) from Bos taurus (Bovine).